The following is an 82-amino-acid chain: Large ribosomal subunit protein uL23 (82 aa).

This sequence belongs to the universal ribosomal protein uL23 family. In terms of assembly, part of the 50S ribosomal subunit. Contacts protein L29.

Its function is as follows. Binds to 23S rRNA. One of the proteins that surrounds the polypeptide exit tunnel on the outside of the ribosome. This chain is Large ribosomal subunit protein uL23, found in Methanosarcina barkeri (strain Fusaro / DSM 804).